A 704-amino-acid polypeptide reads, in one-letter code: Eukaryotic translation initiation factor 2-alpha kinase 1 (704 aa).

In terms of domain architecture, Protein kinase spans 224–667 (FEELELLGKG…LTSNLFHDLV (444 aa)). ATP-binding positions include 230–238 (LGKGGYGSV) and lysine 253. Residue aspartate 491 is the Proton acceptor of the active site.

It belongs to the protein kinase superfamily. Ser/Thr protein kinase family. GCN2 subfamily. In terms of processing, autophosphorylated.

It catalyses the reaction L-seryl-[protein] + ATP = O-phospho-L-seryl-[protein] + ADP + H(+). The catalysed reaction is L-threonyl-[protein] + ATP = O-phospho-L-threonyl-[protein] + ADP + H(+). Functionally, mediates down-regulation of protein synthesis in response to stress conditions by the phosphorylation of the alpha subunit of eIF-2 (tif211) on 'Ser-52'. Protein synthesis is inhibited at the level of initiation. Activity is inhibited in the presence of heme. This Schizosaccharomyces pombe (strain 972 / ATCC 24843) (Fission yeast) protein is Eukaryotic translation initiation factor 2-alpha kinase 1 (hri1).